Reading from the N-terminus, the 86-residue chain is Large ribosomal subunit protein uL24 (86 aa).

The protein belongs to the universal ribosomal protein uL24 family. As to quaternary structure, part of the 50S ribosomal subunit.

One of two assembly initiator proteins, it binds directly to the 5'-end of the 23S rRNA, where it nucleates assembly of the 50S subunit. Its function is as follows. One of the proteins that surrounds the polypeptide exit tunnel on the outside of the subunit. This Bdellovibrio bacteriovorus (strain ATCC 15356 / DSM 50701 / NCIMB 9529 / HD100) protein is Large ribosomal subunit protein uL24.